The primary structure comprises 564 residues: MDSRYNSTAGIGDLNQLSAAIPATRVEVSVSCRNLLDRDTFSKSDPICVLYVQGVGNKEWREFGRTEVIDNTLNPDFVRKFILDYFFEERENLRFDLYDVDSKSPNLSKHDFLGQVFCTLGEIVGSQGSRLEKPIVGIPGKKCGTIILTAEELNCCRDAVLMQFCANKLDKKDFFGKSDPFLVFYRSNEDGSFTICHKTEVVKNTLNPVWQAFKISVRALCNGDYDRTIKVEVYDWDRDGSHDFIGEFTTSYRELSRGQSQFNVYEVVNPKKKGKKKKYTNSGTVTLLSFLVETEVSFLDYIKGGTQINFTVAIDFTASNGNPAQPTSLHYMNPYQLNAYGMALKAVGEIVQDYDSDKMFPALGFGAKLPPDGRISHEFALNGNPQNPYCDGIEGVMEAYYRSLKSVQLYGPTNFAPVINHVARYASSVKDGSQYFVLLIVTDGVISDMAQTKESIVNASKLPMSIIIVGVGPAEFDAMVELDGDDVRVSSRGKYAERDIVQFVPFRDYIDRSGNHILSMARLAKDVLAEIPEQFLSYMRARGIKPSPAPPPYTPPTHVLQTQI.

2 consecutive C2 domains span residues 1 to 133 (MDSR…RLEK) and 142 to 265 (KCGT…FNVY). The Ca(2+) site is built by Asp-39, Asp-45, Asp-99, Asp-101, Ser-104, Lys-109, Asp-111, Asp-173, Asp-179, Asp-235, Asp-237, and Asp-243. Ser-260 is modified (phosphoserine). The region spanning 309–510 (NFTVAIDFTA…VQFVPFRDYI (202 aa)) is the VWFA domain.

This sequence belongs to the copine family. It depends on Ca(2+) as a cofactor.

Its function is as follows. Probable calcium-dependent phospholipid-binding protein that may play a role in calcium-mediated intracellular processes. In Homo sapiens (Human), this protein is Copine-8.